Consider the following 214-residue polypeptide: U3 small nucleolar RNA-associated protein 16 (214 aa).

Over residues 1–10 (MSNGHVKFDA) the composition is skewed to basic and acidic residues. The interval 1–106 (MSNGHVKFDA…KSVNETEVTD (106 aa)) is disordered. S16 carries the post-translational modification Phosphoserine. Positions 22–41 (DRQDDVLVISKKDKEVHSSS) are enriched in basic and acidic residues. The span at 42 to 52 (DEESDDDDAPQ) shows a compositional bias: acidic residues. Residues S45, S65, and S144 each carry the phosphoserine modification. A compositionally biased stretch (basic and acidic residues) spans 54-75 (EGLHSGKSEVESQITQREEAIR). The tract at residues 182-214 (STTQDSKTLPPKKESSIIRSKDRWLNRKALNKG) is disordered. Positions 192–206 (PKKESSIIRSKDRWL) are enriched in basic and acidic residues.

This sequence belongs to the UTP16 family. Part of the small subunit (SSU) processome composed of at least 40 protein subunits and the RNA chaperone small nucleolar RNA (snoRNA) U3. Interacts with snoRNA U3. Interacts with MPP10.

The protein localises to the nucleus. It localises to the nucleolus. In terms of biological role, functions as part of the small subunit (SSU) processome, first precursor of the small eukaryotic ribosomal subunit that coordinates the first two steps of ribosome biogenesis in transcription of the primary transcript pre-RNA and pre-18S processing. During the assembly of the SSU processome in the nucleolus, many ribosome biogenesis factors, an RNA chaperone and ribosomal proteins associate with the nascent pre-rRNA and work in concert to generate RNA folding, modifications, rearrangements and cleavage as well as targeted degradation of pre-ribosomal RNA by the RNA exosome. Has a role in bud site selection maybe via the regulation of expression of bipolar budding components. In Saccharomyces cerevisiae (strain ATCC 204508 / S288c) (Baker's yeast), this protein is U3 small nucleolar RNA-associated protein 16 (BUD21).